Here is a 361-residue protein sequence, read N- to C-terminus: GDSL esterase/lipase At4g18970 (361 aa).

The signal sequence occupies residues 1–22 (MARVCVMMMAMAIAMAMNIAMG). The active-site Nucleophile is the S35. Residues D325 and H328 contribute to the active site.

This sequence belongs to the 'GDSL' lipolytic enzyme family.

It is found in the secreted. The chain is GDSL esterase/lipase At4g18970 from Arabidopsis thaliana (Mouse-ear cress).